We begin with the raw amino-acid sequence, 257 residues long: MGPRGRQSPSATLAPSQGSCFFILFCLRLGASCPQACQCPDHAGAVAVHCSSRGLQEIPRDIPADTVLLKLDANRISRVPNGAFQHLPQLRELDLSHNAIEAIGPAAFSGLAGGLRLLDLSHNRIRRIPKDALGKLSAKIRLSHNPLHCECALQEALWELKLDPDSVDEIACHTSAQEQFVGKPLIQVLDSGASFCSTHRKTTDVAMLVTMFGWFTMVIAYVVYYVRHNQEDARRHLEYLKSLPSAPVSKEPLSPVP.

The signal sequence occupies residues 1 to 32; that stretch reads MGPRGRQSPSATLAPSQGSCFFILFCLRLGAS. An LRRNT domain is found at 33–64; that stretch reads CPQACQCPDHAGAVAVHCSSRGLQEIPRDIPA. 3 LRR repeats span residues 65–86, 89–110, and 114–135; these read DTVL…AFQH, QLRE…AFSG, and GLRL…ALGK. The region spanning 145 to 198 is the LRRCT domain; it reads NPLHCECALQEALWELKLDPDSVDEIACHTSAQEQFVGKPLIQVLDSGASFCST. The chain crosses the membrane as a helical span at residues 205–225; the sequence is VAMLVTMFGWFTMVIAYVVYY.

The protein belongs to the LRRC3 family.

Its subcellular location is the membrane. This Mus musculus (Mouse) protein is Leucine-rich repeat-containing protein 3 (Lrrc3).